Consider the following 515-residue polypeptide: Maturase K (515 aa).

It belongs to the intron maturase 2 family. MatK subfamily.

It localises to the plastid. Its subcellular location is the chloroplast. In terms of biological role, usually encoded in the trnK tRNA gene intron. Probably assists in splicing its own and other chloroplast group II introns. The sequence is that of Maturase K from Picea mariana (Black spruce).